The chain runs to 384 residues: Probable peptidoglycan glycosyltransferase FtsW (384 aa).

Over 1–19 the chain is Cytoplasmic; that stretch reads MAAVWRWFVPERPSFYDRG. A helical membrane pass occupies residues 20 to 40; the sequence is LLALTFSLMGIGLMMVASASI. The Periplasmic segment spans residues 41 to 54; it reads KEGPGGDMFYFTKR. Residues 55–75 traverse the membrane as a helical segment; that stretch reads HLIFLFVCLGIGVGTLYLPLE. Residues 76–83 lie on the Cytoplasmic side of the membrane; sequence RWREWSGR. Residues 84 to 104 traverse the membrane as a helical segment; sequence LLVGALGLLFAVLAVGRTVNG. The Periplasmic portion of the chain corresponds to 105 to 110; the sequence is AKRWIG. The helical transmembrane segment at 111 to 131 threads the bilayer; that stretch reads FGFFNIQPAELAKLALIVFIA. Over 132–143 the chain is Cytoplasmic; it reads SYLVRRSDEVRG. The chain crosses the membrane as a helical span at residues 144-164; the sequence is NIAGFVKPLAVVFLLAIMLLA. Topologically, residues 165–166 are periplasmic; sequence QP. A helical membrane pass occupies residues 167 to 187; sequence DLGSVVVLFVCTFGLLFIGGA. A topological domain (cytoplasmic) is located at residue Lys188. A helical membrane pass occupies residues 189 to 209; the sequence is LVQFIAIIVAGLSALAGLIIY. Residues 210–267 lie on the Periplasmic side of the membrane; the sequence is EPYRLRRVTSFLDPWADPFGSGYQLTQSLMAFGRGGFFGQGLGNSVQKLSYLPEAHTD. Residues 268 to 288 traverse the membrane as a helical segment; sequence FVFAILGEELGYFGVLVVLFL. The Cytoplasmic segment spans residues 289-316; the sequence is QLLLAMKALQIGRTALLRSKFFEGYMAC. The chain crosses the membrane as a helical span at residues 317 to 337; it reads GIGIWFSFQTVVNVGAAAGML. Over 338 to 343 the chain is Periplasmic; the sequence is PTKGLT. Residues 344–364 form a helical membrane-spanning segment; sequence LPLVSYGGSSLIAITMAVAIL. Topologically, residues 365 to 384 are cytoplasmic; that stretch reads LRIDFERRLDTSHVIQREAA.

The protein belongs to the SEDS family. FtsW subfamily.

It localises to the cell inner membrane. The enzyme catalyses [GlcNAc-(1-&gt;4)-Mur2Ac(oyl-L-Ala-gamma-D-Glu-L-Lys-D-Ala-D-Ala)](n)-di-trans,octa-cis-undecaprenyl diphosphate + beta-D-GlcNAc-(1-&gt;4)-Mur2Ac(oyl-L-Ala-gamma-D-Glu-L-Lys-D-Ala-D-Ala)-di-trans,octa-cis-undecaprenyl diphosphate = [GlcNAc-(1-&gt;4)-Mur2Ac(oyl-L-Ala-gamma-D-Glu-L-Lys-D-Ala-D-Ala)](n+1)-di-trans,octa-cis-undecaprenyl diphosphate + di-trans,octa-cis-undecaprenyl diphosphate + H(+). The protein operates within cell wall biogenesis; peptidoglycan biosynthesis. In terms of biological role, peptidoglycan polymerase that is essential for cell division. This is Probable peptidoglycan glycosyltransferase FtsW from Tolumonas auensis (strain DSM 9187 / NBRC 110442 / TA 4).